The following is a 257-amino-acid chain: Beta-fibrinogenase (257 aa).

The N-terminal stretch at 1–18 (MVLIRVLANLLLLQLSHA) is a signal peptide. The propeptide occupies 19–24 (QKSSEL). Residues 25–248 (VVGGDECNIN…YTDWIQSIIA (224 aa)) enclose the Peptidase S1 domain. Intrachain disulfides connect C31-C162, C49-C65, C97-C255, C141-C209, C173-C188, and C199-C224. The N-linked (GlcNAc...) asparagine glycan is linked to N44. The active-site Charge relay system is the H64. N78 and N102 each carry an N-linked (GlcNAc...) asparagine glycan. D109 acts as the Charge relay system in catalysis. N-linked (GlcNAc...) asparagine glycosylation is found at N153 and N169. The Charge relay system role is filled by S203. N250 carries an N-linked (GlcNAc...) asparagine glycan.

As to quaternary structure, monomer. Glycosylated. Contains 23.0% of hexoses, 8.3% of hexosamines and 1.0% of sialic acids. In terms of tissue distribution, expressed by the venom gland.

The protein localises to the secreted. Inhibited by diisopropylfluorophosphate (DFP) and PMSF. Functionally, snake venom serine protease that has fibrinogenolytic activities by hydrolyzing the beta chain of fibrinogen (FGB). Typical arginine esterase which hydrolyzes esters and amides of arginine. In Macrovipera lebetinus (Levantine viper), this protein is Beta-fibrinogenase.